We begin with the raw amino-acid sequence, 426 residues long: L-cysteine:1D-myo-inositol 2-amino-2-deoxy-alpha-D-glucopyranoside ligase (426 aa).

Residue C45 participates in Zn(2+) binding. Residues C45–T48, T60, and N83–T85 contribute to the L-cysteinyl-5'-AMP site. The short motif at I47–H57 is the 'HIGH' region element. A 'ERGGDP' region motif is present at residues E199–P204. An L-cysteinyl-5'-AMP-binding site is contributed by W239. C243 lines the Zn(2+) pocket. G261 to D263 serves as a coordination point for L-cysteinyl-5'-AMP. H268 contributes to the Zn(2+) binding site. V294 contributes to the L-cysteinyl-5'-AMP binding site. The 'KMSKS' region motif lies at K300–S304.

This sequence belongs to the class-I aminoacyl-tRNA synthetase family. MshC subfamily. As to quaternary structure, monomer. It depends on Zn(2+) as a cofactor.

It carries out the reaction 1D-myo-inositol 2-amino-2-deoxy-alpha-D-glucopyranoside + L-cysteine + ATP = 1D-myo-inositol 2-(L-cysteinylamino)-2-deoxy-alpha-D-glucopyranoside + AMP + diphosphate + H(+). Catalyzes the ATP-dependent condensation of GlcN-Ins and L-cysteine to form L-Cys-GlcN-Ins. The sequence is that of L-cysteine:1D-myo-inositol 2-amino-2-deoxy-alpha-D-glucopyranoside ligase from Clavibacter michiganensis subsp. michiganensis (strain NCPPB 382).